Here is a 341-residue protein sequence, read N- to C-terminus: Gibberellin 2-beta-dioxygenase 5 (341 aa).

The Fe2OG dioxygenase domain maps to Arg187–Pro290. Tyr198 contacts 2-oxoglutarate. 3 residues coordinate Fe cation: His213, Asp215, and His271. 2-oxoglutarate is bound by residues Arg281 and Ser283.

The protein belongs to the iron/ascorbate-dependent oxidoreductase family. GA2OX subfamily. It depends on L-ascorbate as a cofactor. Fe(2+) is required as a cofactor. Expressed in roots, leaves, culms, leaf sheaths and young panicles.

It is found in the cytoplasm. It localises to the nucleus. It carries out the reaction gibberellin A1 + 2-oxoglutarate + O2 = gibberellin A8 + succinate + CO2. The protein operates within plant hormone biosynthesis; gibberellin biosynthesis. Functionally, catalyzes the 2-beta-hydroxylation of several biologically active gibberellins (GAs), leading to the homeostatic regulation of their endogenous level. Catabolism of GAs plays a central role in plant development. In vitro, converts GA12 and GA53 to the corresponding 2-beta-hydroxylated products GA110 and GA97, respectively. The sequence is that of Gibberellin 2-beta-dioxygenase 5 from Oryza sativa subsp. japonica (Rice).